An 868-amino-acid polypeptide reads, in one-letter code: Alanine--tRNA ligase (868 aa).

Zn(2+) is bound by residues His-556, His-560, Cys-666, and His-670.

This sequence belongs to the class-II aminoacyl-tRNA synthetase family. Requires Zn(2+) as cofactor.

It localises to the cytoplasm. It catalyses the reaction tRNA(Ala) + L-alanine + ATP = L-alanyl-tRNA(Ala) + AMP + diphosphate. Functionally, catalyzes the attachment of alanine to tRNA(Ala) in a two-step reaction: alanine is first activated by ATP to form Ala-AMP and then transferred to the acceptor end of tRNA(Ala). Also edits incorrectly charged Ser-tRNA(Ala) and Gly-tRNA(Ala) via its editing domain. The sequence is that of Alanine--tRNA ligase from Elusimicrobium minutum (strain Pei191).